The following is a 221-amino-acid chain: MPLIFYSSCCFFLVSTSAFCSWVCSRPSQSSLCSLCLSCLFFILLFWSPSTSYLILVFFLLYTCVVLQTQLAYSLSAFMNYIGVLAFFTRLIVQFLRLVLMFVVYCMMHDTVMLQNYSQKNFLVGDSFWEELMSVQPNGTSIFFFLFATFPLRLFYWCYECMHTFFVVTVQFSAFFTIVFWLFLLFYTFFVYEKYEHHFDNITKMHKKLIEELKSLKKDSF.

It is found in the mitochondrion. This is an uncharacterized protein from Paramecium tetraurelia.